Consider the following 195-residue polypeptide: Cysteine/O-acetylserine efflux protein (195 aa).

Transmembrane regions (helical) follow at residues 47–67 (SLGF…LAVI), 70–90 (AAVH…AWKI), 105–125 (ISFW…LYGV), 142–162 (VVGV…CWAL), and 177–194 (QLNI…VRIF).

This sequence belongs to the Rht family.

Its subcellular location is the cell inner membrane. It catalyses the reaction O-acetyl-L-serine(in) = O-acetyl-L-serine(out). The enzyme catalyses L-cysteine(in) = L-cysteine(out). Functionally, exporter of O-acetylserine (OAS) and cysteine. This chain is Cysteine/O-acetylserine efflux protein (eamB), found in Shigella boydii serotype 4 (strain Sb227).